Consider the following 513-residue polypeptide: Histidine--tRNA ligase (513 aa).

The N-terminal 24 residues, 1-24, are a transit peptide targeting the mitochondrion; it reads MADKAQLQEAIKTQGEVVRKLKSE. Residues 3 to 59 enclose the WHEP-TRS domain; it reads DKAQLQEAIKTQGEVVRKLKSEKASKEQIDEEVARLLQLKAQLGGDEGKHVFVLKTA. Residues 130-132, Arg-157, Gln-173, Asp-177, Arg-326, and 330-331 contribute to the L-histidine site; these read DLT and YY.

This sequence belongs to the class-II aminoacyl-tRNA synthetase family.

The protein resides in the cytoplasm. It is found in the mitochondrion. The enzyme catalyses tRNA(His) + L-histidine + ATP = L-histidyl-tRNA(His) + AMP + diphosphate + H(+). Catalyzes the aminoacylation of histidyl-tRNA. The sequence is that of Histidine--tRNA ligase from Danio rerio (Zebrafish).